The following is a 56-amino-acid chain: Photosystem II assembly protein Psb34 (56 aa).

Residues 1–33 (MRYTTDEGGRLNNFAIEPKVYQAQPWTPQQKVR) are Cytoplasmic-facing. A helical membrane pass occupies residues 34-54 (AALLVGGGLLLVAGLVAIAVG). Over 55-56 (VS) the chain is Extracellular.

In terms of assembly, part of photosystem II (PSII) assembly intermediate complex PSII-I; crystallized from a strain without psbJ, it forms monomeric PSII before addition of the oxygen evolving complex. PSII-I includes 3 assembly factors not found in mature PSII (Psb27, Psb28 and Psb34). The N-terminus of Psb34 (this protein) binds to CP47 (psbB) in close proximity to PsbH on the cytoplasmic face of PSII.

The protein localises to the cellular thylakoid membrane. In terms of biological role, involved in photosystem II (PSII) assembly and/or repair, probably in conversion of late PSII assembly intermediates into mature dimeric PSII. The chain is Photosystem II assembly protein Psb34 from Thermosynechococcus vestitus (strain NIES-2133 / IAM M-273 / BP-1).